The primary structure comprises 250 residues: Leucyl/phenylalanyl-tRNA--protein transferase (250 aa).

The protein belongs to the L/F-transferase family.

It localises to the cytoplasm. The catalysed reaction is N-terminal L-lysyl-[protein] + L-leucyl-tRNA(Leu) = N-terminal L-leucyl-L-lysyl-[protein] + tRNA(Leu) + H(+). It catalyses the reaction N-terminal L-arginyl-[protein] + L-leucyl-tRNA(Leu) = N-terminal L-leucyl-L-arginyl-[protein] + tRNA(Leu) + H(+). The enzyme catalyses L-phenylalanyl-tRNA(Phe) + an N-terminal L-alpha-aminoacyl-[protein] = an N-terminal L-phenylalanyl-L-alpha-aminoacyl-[protein] + tRNA(Phe). Its function is as follows. Functions in the N-end rule pathway of protein degradation where it conjugates Leu, Phe and, less efficiently, Met from aminoacyl-tRNAs to the N-termini of proteins containing an N-terminal arginine or lysine. The chain is Leucyl/phenylalanyl-tRNA--protein transferase from Cupriavidus taiwanensis (strain DSM 17343 / BCRC 17206 / CCUG 44338 / CIP 107171 / LMG 19424 / R1) (Ralstonia taiwanensis (strain LMG 19424)).